The following is a 1153-amino-acid chain: Probable RNA-dependent RNA polymerase 3 (1153 aa).

It belongs to the RdRP family. Expressed in shoot apical meristem (SAM) and panicles.

It catalyses the reaction RNA(n) + a ribonucleoside 5'-triphosphate = RNA(n+1) + diphosphate. Probably involved in the RNA silencing pathway and required for the generation of small interfering RNAs (siRNAs). The chain is Probable RNA-dependent RNA polymerase 3 (RDR3) from Oryza sativa subsp. japonica (Rice).